Here is a 109-residue protein sequence, read N- to C-terminus: Globin (109 aa).

Positions 3–109 (PLTAAEVSSL…IFPIAGIHAL (107 aa)) constitute a Globin domain.

Belongs to the globin family. Monomer.

Oxygen binding protein. The protein is Globin of Dicrocoelium dendriticum (Small liver fluke).